Here is a 633-residue protein sequence, read N- to C-terminus: ATP-dependent RNA helicase mss116, mitochondrial (633 aa).

The N-terminal 32 residues, M1–G32, are a transit peptide targeting the mitochondrion. Positions E38 to I66 match the Q motif motif. The Helicase ATP-binding domain occupies I70–T248. P83–H90 serves as a coordination point for ATP. Positions R195 to E198 match the DEAD box motif. The Helicase C-terminal domain maps to F262 to L429. The interval F567–A633 is disordered.

Belongs to the DEAD box helicase family. DDX18/HAS1 subfamily.

The protein resides in the mitochondrion matrix. It carries out the reaction ATP + H2O = ADP + phosphate + H(+). Functionally, ATP-dependent RNA helicase required for mitochondrial splicing of group I and II introns. Also required for efficient mitochondrial translation. The chain is ATP-dependent RNA helicase mss116, mitochondrial (mss116) from Aspergillus oryzae (strain ATCC 42149 / RIB 40) (Yellow koji mold).